We begin with the raw amino-acid sequence, 103 residues long: Large ribosomal subunit protein bL21 (103 aa).

This sequence belongs to the bacterial ribosomal protein bL21 family. In terms of assembly, part of the 50S ribosomal subunit. Contacts protein L20.

In terms of biological role, this protein binds to 23S rRNA in the presence of protein L20. In Alcanivorax borkumensis (strain ATCC 700651 / DSM 11573 / NCIMB 13689 / SK2), this protein is Large ribosomal subunit protein bL21.